The following is a 186-amino-acid chain: MTWIGLLIVGLTAIAVQGEVPIVTRAEWNAKPPNGAIDSMETPLPRAVIAHTAGGACADDVTCSQHMQNLQNFQMSKQKFSDIGYHYLIGGNGKVYEGRSPSQRGAFAGPNNDGSLGIAFIGNFEERAPNKEALDAAKELLEQAVKQAQLVEGYKLLGHRQVSATKSPGEALYALIQQWPNWSEEM.

The N-terminal stretch at 1–18 (MTWIGLLIVGLTAIAVQG) is a signal peptide. Residues 47–169 (AVIAHTAGGA…RQVSATKSPG (123 aa)) form the N-acetylmuramoyl-L-alanine amidase domain. Residues cysteine 57 and cysteine 63 are joined by a disulfide bond. Asparagine 181 carries an N-linked (GlcNAc...) asparagine glycan.

The protein belongs to the N-acetylmuramoyl-L-alanine amidase 2 family. In terms of tissue distribution, in larvae, it is mainly expressed in fat body. Also expressed in uninduced hemocytes and mbn-2 cells.

It is found in the secreted. Its function is as follows. Peptidoglycan-recognition protein that plays a key role in innate immunity by binding to peptidoglycans (PGN) of Gram-positive bacteria and activating the Toll pathway. Has no activity against on Gram-negative bacteria and fungi. Shows some partial redundancy with PRPGP-SA in Gram-positive bacteria recognition. May act by activating the proteolytic cleavage of Spatzle and the subsequent activation of Toll pathway. Recognizes S.aureus PGN. The protein is Peptidoglycan-recognition protein SD (PGRP-SD) of Drosophila melanogaster (Fruit fly).